A 324-amino-acid polypeptide reads, in one-letter code: MKRTIAIVAGGDTSEFHVSLRSAQGIYSFIDKEKYTLYIVEMQGTRWEVQLPDGAKAPVDRNDFSFMLGTEKIRFDFAYITIHGTPGEDGRLQGYFDMMHIPYSCCGVLAAAITYDKFTCNQYLKAFGVRIAESLLLRQGQSVSDEDVMEKIGLPCFIKPSLGGSSFGVTKVKTKEQIQPAIVKAFEEAQEVLVEAFMEGTELTCGCYKTKDKTVIFPPTEVVTHNEFFDYDAKYNGQVDEITPARISDELTNRVQMLTSAIYDILGCSGIIRVDYIVTAGEKINLLEVNTTPGMTTTSFIPQQVRAAGLDIKDVMTDIIENKF.

The ATP-grasp domain maps to 121 to 321 (NQYLKAFGVR…IKDVMTDIIE (201 aa)). ATP is bound at residue 149–204 (MEKIGLPCFIKPSLGGSSFGVTKVKTKEQIQPAIVKAFEEAQEVLVEAFMEGTELT). Mg(2+) contacts are provided by Asp-275, Glu-288, and Asn-290.

Belongs to the D-alanine--D-alanine ligase family. Requires Mg(2+) as cofactor. Mn(2+) is required as a cofactor.

It is found in the cytoplasm. The enzyme catalyses 2 D-alanine + ATP = D-alanyl-D-alanine + ADP + phosphate + H(+). The protein operates within cell wall biogenesis; peptidoglycan biosynthesis. Cell wall formation. In Bacteroides thetaiotaomicron (strain ATCC 29148 / DSM 2079 / JCM 5827 / CCUG 10774 / NCTC 10582 / VPI-5482 / E50), this protein is D-alanine--D-alanine ligase.